A 299-amino-acid chain; its full sequence is Putative syntaxin-2 (299 aa).

Residues 1 to 270 (MRDRLNEFQS…SAMRKKICVA (270 aa)) are Cytoplasmic-facing. Residues 112-146 (EKRMRQNQLELLKDNLNKLINLFNETHQDYKSRVS) are a coiled coil. The 63-residue stretch at 193-255 (YEDVKKRHGE…KQGSANVKTA (63 aa)) folds into the t-SNARE coiled-coil homology domain. A helical; Anchor for type IV membrane protein membrane pass occupies residues 271-291 (AILITILLILIIVAIILAVVL). Over 292–299 (SRGNNNNK) the chain is Extracellular.

Belongs to the syntaxin family.

Its subcellular location is the membrane. Potentially involved in docking of synaptic vesicles at presynaptic active zones. This Caenorhabditis elegans protein is Putative syntaxin-2 (syx-2).